Reading from the N-terminus, the 518-residue chain is Forkhead box protein H1 (518 aa).

The segment at 72 to 113 (GSMYGLSPGTHEGSCTHTHEGPKDSMAGDQTRSRKSKKKNYH) is disordered. A compositionally biased stretch (basic residues) spans 104–113 (SRKSKKKNYH). A DNA-binding region (fork-head) is located at residues 117–213 (KPPYSYLAMI…MKLQNTALTR (97 aa)). The tract at residues 318-397 (KPTRNARSPG…NYSPIEPPKK (80 aa)) is disordered. Positions 329–346 (STIHSTYSSSSSSISTIS) are enriched in low complexity. Residues 380–506 (TSSDPDTGNY…PSFLSQCLGS (127 aa)) are SMAD-interaction domain (SID). The Fast/FoxH1 motif 1 (FM1) signature appears at 405 to 409 (LPTSY). The Fast/FoxH1 motif 2 (FM2) signature appears at 415–421 (PNVVAPP). Residues 470-491 (LDNMLRAMPPNKSVFDVLTSHP) carry the SMAD interaction motif (SIM) motif.

ARF1 contains 2 smad2s, 1 smad4 and 1 foxh1/fast-1 protein. Interaction with smad4 is most likely indirect through interaction with the MH2 domain of smad2. Binds to the MH2 domain of smad3, which can incorporate into the ARF1 complex. The ARF1 and ARF2 complexes are activated by distinct TGF-beta family members; formation of ARF1 is promoted by activin. Interacts (via Fork-head domain) with gtf2ird1/wbscr11 (via repeats 4-5). Highly expressed in the animal cap (prospective ectoderm) and prospective mesoderm of stage 10.25 embryos.

It is found in the nucleus. Its function is as follows. Transcriptional activator. Recognizes and binds to the DNA sequence 5'-TGT[GT][GT]ATT-3'. Upon TGF-beta induction, forms a transcriptionally active complex with smad2 and smad4 called activin-responsive factor 1 (ARF1), which binds a site on the mix-B/mix.2 promoter called the activin response element (ARE). Binds to activated smads and the ARE with much lower affinity than fast3. Necessary for the first steps in mesoderm specification, directly inducing mesodermal genes. Acts with fast3 to control the convergent extension movements of gastrulation. Binds to the proximal element (PE) of the gsc gene and cooperates with gtf2ird1/wbscr11 and SMAD proteins to regulate gsc transcription. The chain is Forkhead box protein H1 (foxh1) from Xenopus laevis (African clawed frog).